The sequence spans 88 residues: Acyl carrier protein (88 aa).

Positions 4-79 constitute a Carrier domain; that stretch reads DSVPAKVMEI…AAVDYIQNKM (76 aa). S39 carries the O-(pantetheine 4'-phosphoryl)serine modification.

It belongs to the acyl carrier protein (ACP) family. In terms of processing, 4'-phosphopantetheine is transferred from CoA to a specific serine of apo-ACP by AcpS. This modification is essential for activity because fatty acids are bound in thioester linkage to the sulfhydryl of the prosthetic group.

It is found in the cytoplasm. Its pathway is lipid metabolism; fatty acid biosynthesis. In terms of biological role, carrier of the growing fatty acid chain in fatty acid biosynthesis. The sequence is that of Acyl carrier protein from Trichodesmium erythraeum (strain IMS101).